The chain runs to 557 residues: Protein Red (557 aa).

A disordered region spans residues 1 to 90 (MPERDSEPFS…YAKLRQQEIE (90 aa)). Over residues 16–25 (DGHDVDDPHS) the composition is skewed to basic and acidic residues. Residues 42–53 (TPRAAPTSAPPS) show a composition bias toward low complexity. An N6-acetyllysine mark is found at Lys-98 and Lys-137. A Glycyl lysine isopeptide (Lys-Gly) (interchain with G-Cter in SUMO2) cross-link involves residue Lys-151. The tract at residues 181 to 205 (KEKEEEELMEKPQKETKKDEDPENK) is disordered. Position 287 is a phosphoserine (Ser-287). Residues 294–303 (RNKKLKKKDK) are compositionally biased toward basic residues. Residues 294–402 (RNKKLKKKDK…PMDVDKGPGS (109 aa)) are disordered. Basic and acidic residues predominate over residues 304-313 (GKLEEKKPPE). Residues Lys-310 and Lys-331 each participate in a glycyl lysine isopeptide (Lys-Gly) (interchain with G-Cter in SUMO2) cross-link. The span at 332–398 (TPRDKERERY…VDDEPMDVDK (67 aa)) shows a compositional bias: basic and acidic residues. Repeat copies occupy residues 342 to 343 (RE), 344 to 345 (RE), 346 to 347 (RD), 348 to 349 (RE), 350 to 351 (RD), 352 to 353 (RD), 354 to 355 (RE), 356 to 357 (RD), 358 to 359 (RE), 360 to 361 (RD), 362 to 363 (RE), 364 to 365 (RE), 366 to 367 (RE), 368 to 369 (RD), 370 to 371 (RE), 372 to 373 (RE), and 374 to 375 (RE). Residues 342 to 375 (RERERDRERDRDRERDRERDRERERERDRERERE) form a 17 X 2 AA tandem repeats of R-[ED] region. Residues Lys-386, Lys-388, Lys-404, and Lys-408 each participate in a glycyl lysine isopeptide (Lys-Gly) (interchain with G-Cter in SUMO2) cross-link. Phosphoserine occurs at positions 417 and 460. Residue Thr-485 is modified to Phosphothreonine. Residues Lys-496, Lys-501, and Lys-509 each participate in a glycyl lysine isopeptide (Lys-Gly) (interchain with G-Cter in SUMO2) cross-link. Phosphoserine is present on Ser-536. Residues Lys-541, Lys-543, and Lys-553 each participate in a glycyl lysine isopeptide (Lys-Gly) (interchain with G-Cter in SUMO2) cross-link.

The protein belongs to the RED family. In terms of assembly, component of the spliceosome B complex. Interacts with SMU1. Interacts with MAD1L1. May interact with DHX15. Ubiquitous.

Its subcellular location is the nucleus. It is found in the nucleoplasm. The protein resides in the chromosome. The protein localises to the cytoplasm. It localises to the cytoskeleton. Its subcellular location is the spindle pole. Its function is as follows. Involved in pre-mRNA splicing as a component of the spliceosome. Auxiliary spliceosomal protein that regulates selection of alternative splice sites in a small set of target pre-mRNA species. Required for normal mitotic cell cycle progression. Recruits MAD1L1 and MAD2L1 to kinetochores, and is required to trigger the spindle assembly checkpoint. Required for normal accumulation of SMU1. This Mus musculus (Mouse) protein is Protein Red (Ik).